A 292-amino-acid chain; its full sequence is Ribosomal protein L11 methyltransferase (292 aa).

Residues threonine 143, glycine 164, aspartate 186, and asparagine 228 each contribute to the S-adenosyl-L-methionine site.

This sequence belongs to the methyltransferase superfamily. PrmA family.

The protein localises to the cytoplasm. It carries out the reaction L-lysyl-[protein] + 3 S-adenosyl-L-methionine = N(6),N(6),N(6)-trimethyl-L-lysyl-[protein] + 3 S-adenosyl-L-homocysteine + 3 H(+). Its function is as follows. Methylates ribosomal protein L11. The chain is Ribosomal protein L11 methyltransferase from Aeromonas salmonicida (strain A449).